The primary structure comprises 249 residues: 5-amino-6-(5-phospho-D-ribitylamino)uracil phosphatase YcsE (249 aa).

Aspartate 16 (nucleophile) is an active-site residue. Aspartate 16 serves as a coordination point for Mg(2+). Methionine 17 is a phosphate binding site. Residue aspartate 18 coordinates Mg(2+). Phosphate-binding positions include 50–51 (TG) and lysine 177. Residues aspartate 200 and serine 201 each coordinate Mg(2+). Residue asparagine 203 participates in phosphate binding.

This sequence belongs to the HAD-like hydrolase superfamily. Cof family. The cofactor is Mg(2+).

The catalysed reaction is 5-amino-6-(5-phospho-D-ribitylamino)uracil + H2O = 5-amino-6-(D-ribitylamino)uracil + phosphate. It participates in cofactor biosynthesis; riboflavin biosynthesis; 5-amino-6-(D-ribitylamino)uracil from GTP: step 4/4. In terms of biological role, catalyzes the dephosphorylation of the riboflavin precursor 5-amino-6-(5-phospho-D-ribitylamino)uracil and of flavin mononucleotide (FMN) in vitro. To a lesser extent, may also catalyze the dephosphorylation of a broad range of substrates such as phosphorylated sugars and triphosphate nucleotides in vitro. The sequence is that of 5-amino-6-(5-phospho-D-ribitylamino)uracil phosphatase YcsE (ycsE) from Bacillus subtilis (strain 168).